Reading from the N-terminus, the 664-residue chain is Bifunctional 3-dehydroquinate synthase/phosphatase (664 aa).

A 3-dehydroquinate synthase region spans residues 1–352; sequence MKKIFDDIYV…KIIDKYKNNF (352 aa). Residues 61-66, 95-99, 119-120, K132, K141, and 159-162 contribute to the NAD(+) site; these read DGEEYK, GVICD, TS, and FLKT. Residues E174, H238, and H255 each coordinate Zn(2+). The interval 353–664 is GPPA/PPX; that stretch reads LRASIDIGTN…GAILEGVENK (312 aa).

This sequence in the N-terminal section; belongs to the sugar phosphate cyclases superfamily. Dehydroquinate synthase family. It in the C-terminal section; belongs to the GppA/Ppx family. As to quaternary structure, monomer. NAD(+) is required as a cofactor. The cofactor is Co(2+). Requires Zn(2+) as cofactor.

Its subcellular location is the cytoplasm. The catalysed reaction is 7-phospho-2-dehydro-3-deoxy-D-arabino-heptonate = 3-dehydroquinate + phosphate. It participates in metabolic intermediate biosynthesis; chorismate biosynthesis; chorismate from D-erythrose 4-phosphate and phosphoenolpyruvate: step 2/7. This is Bifunctional 3-dehydroquinate synthase/phosphatase (aroB) from Fusobacterium nucleatum subsp. nucleatum (strain ATCC 25586 / DSM 15643 / BCRC 10681 / CIP 101130 / JCM 8532 / KCTC 2640 / LMG 13131 / VPI 4355).